We begin with the raw amino-acid sequence, 210 residues long: UPF0173 protein PYRAB01190 (210 aa).

This sequence belongs to the UPF0173 family.

The sequence is that of UPF0173 protein PYRAB01190 from Pyrococcus abyssi (strain GE5 / Orsay).